Reading from the N-terminus, the 187-residue chain is Dihydrofolate reductase (187 aa).

Residues 4–185 (PLNCIVAVSQ…IKYKFEVYEK (182 aa)) form the DHFR domain. The segment at 8–37 (IVAVSQNMGIGKNGDFPWPMLRNEFKYFQR) is involved in methotrexate binding. NADP(+)-binding positions include alanine 10 and 16–22 (GIGKNGD). Substrate is bound at residue 31–36 (EFKYFQ). Lysine 33 bears the N6-acetyllysine; alternate mark. At lysine 33 the chain carries N6-succinyllysine; alternate. Residue 55–57 (RKT) coordinates NADP(+). Positions 60-70 (SIPEKNRPLKD) are involved in methotrexate binding. Arginine 71 lines the substrate pocket. NADP(+)-binding positions include 77–79 (SRE) and 117–124 (GGSSVYKE). Methotrexate is bound at residue threonine 137.

The protein belongs to the dihydrofolate reductase family. Homodimer.

The protein resides in the mitochondrion. Its subcellular location is the cytoplasm. The catalysed reaction is (6S)-5,6,7,8-tetrahydrofolate + NADP(+) = 7,8-dihydrofolate + NADPH + H(+). It participates in cofactor biosynthesis; tetrahydrofolate biosynthesis; 5,6,7,8-tetrahydrofolate from 7,8-dihydrofolate: step 1/1. In terms of biological role, key enzyme in folate metabolism. Contributes to the de novo mitochondrial thymidylate biosynthesis pathway. Catalyzes an essential reaction for de novo glycine and purine synthesis, and for DNA precursor synthesis. Binds its own mRNA. This is Dihydrofolate reductase (DHFR) from Mesocricetus auratus (Golden hamster).